Here is a 462-residue protein sequence, read N- to C-terminus: Cysteine--tRNA ligase (462 aa).

Cysteine 24 provides a ligand contact to Zn(2+). Residues proline 26–histidine 36 carry the 'HIGH' region motif. Residues cysteine 199, histidine 224, and glutamate 228 each coordinate Zn(2+). Residues lysine 256 to serine 260 carry the 'KMSKS' region motif. Lysine 259 serves as a coordination point for ATP.

The protein belongs to the class-I aminoacyl-tRNA synthetase family. Monomer. Zn(2+) is required as a cofactor.

It localises to the cytoplasm. It carries out the reaction tRNA(Cys) + L-cysteine + ATP = L-cysteinyl-tRNA(Cys) + AMP + diphosphate. The sequence is that of Cysteine--tRNA ligase from Campylobacter jejuni subsp. doylei (strain ATCC BAA-1458 / RM4099 / 269.97).